The sequence spans 212 residues: Large ribosomal subunit protein uL4 (212 aa).

Over residues 43–52 (NNRQGTASTK) the composition is skewed to polar residues. The interval 43–77 (NNRQGTASTKTRSEVRGGGRKPWRQKGTGRARAGS) is disordered. The span at 60–71 (GGRKPWRQKGTG) shows a compositional bias: basic residues.

Belongs to the universal ribosomal protein uL4 family. Part of the 50S ribosomal subunit.

Its function is as follows. One of the primary rRNA binding proteins, this protein initially binds near the 5'-end of the 23S rRNA. It is important during the early stages of 50S assembly. It makes multiple contacts with different domains of the 23S rRNA in the assembled 50S subunit and ribosome. In terms of biological role, forms part of the polypeptide exit tunnel. The polypeptide is Large ribosomal subunit protein uL4 (Trichodesmium erythraeum (strain IMS101)).